The primary structure comprises 744 residues: Leukocyte immunoglobulin-like receptor subfamily B member 3A (744 aa).

The N-terminal stretch at 1–24 is a signal peptide; that stretch reads MTFTFTALLCLGLTLGLWIPVLTG. Over 25–543 the chain is Extracellular; sequence SLPKPILRVQ…PPDGLQRYLK (519 aa). Ig-like C2-type domains are found at residues 26–119, 121–221, 223–316, 320–419, and 426–520; these read LPKP…VVTG, YSKP…LVSG, LQKP…VVTG, YHPL…LITG, and FLSV…IVSG. Intrachain disulfides connect cysteine 49/cysteine 98, cysteine 144/cysteine 197, and cysteine 246/cysteine 295. Asparagine 79 carries an N-linked (GlcNAc...) asparagine glycan. N-linked (GlcNAc...) asparagine glycosylation is present at asparagine 338. A disulfide bridge links cysteine 343 with cysteine 395. A glycan (N-linked (GlcNAc...) asparagine) is linked at asparagine 440. A disulfide bridge connects residues cysteine 445 and cysteine 496. Residues 544 to 564 traverse the membrane as a helical segment; sequence ALIGVSVAFLLFLFILIFILL. Over 565–744 the chain is Cytoplasmic; it reads RRRHQEKFRK…PGAVPKNKKQ (180 aa). Residues 572-584 are compositionally biased toward basic and acidic residues; sequence FRKDDEDAQKGKE. 3 disordered regions span residues 572-617, 630-652, and 667-744; these read FRKD…ESLY, ELDT…VEPS, and EQLN…NKKQ. The ITIM motif 1 motif lies at 615 to 620; the sequence is SLYASV. 2 short sequence motifs (ITIM motif) span residues 695–700 and 725–730; these read VTYAQL and SVYAAL. Residues tyrosine 697 and tyrosine 727 each carry the phosphotyrosine; by LYN modification.

As to quaternary structure, interacts with LYN, PTPN6/SHP-1 and PTPN11/SHP-2. In terms of processing, phosphorylated on tyrosine residues by LYN. Phosphorylation at Tyr-697 and Tyr-727 is important for interaction with PTPN6/SHP-1 and PTPN11/SHP-2.

The protein resides in the cell membrane. Its function is as follows. May act as receptor for class I MHC antigens. Becomes activated upon coligation with immune receptors, such as FCGR2B and the B-cell receptor. Down-regulates antigen-induced B-cell activation by recruiting phosphatases to its immunoreceptor tyrosine-based inhibitor motifs (ITIM). The protein is Leukocyte immunoglobulin-like receptor subfamily B member 3A of Rattus norvegicus (Rat).